Here is a 138-residue protein sequence, read N- to C-terminus: MNTETKPLPAWLDKVRWDDNGLVPVIAQEASTNDVLMFAWMNREALAKTIETQRAVYYSRSRKRLWFKGEESGHVQHVHEVRLDCDEDVVLLKVEQVSGIACHTGRHSCFFQKFEGTVDAGDWVAVDPVLKDPEHIYK.

Residue aspartate 84 participates in Mg(2+) binding. A Zn(2+)-binding site is contributed by cysteine 85. Residues aspartate 86 and aspartate 88 each contribute to the Mg(2+) site. Cysteine 102 and cysteine 109 together coordinate Zn(2+).

This sequence belongs to the PRA-CH family. In terms of assembly, homodimer. The cofactor is Mg(2+). Zn(2+) is required as a cofactor.

The protein localises to the cytoplasm. It catalyses the reaction 1-(5-phospho-beta-D-ribosyl)-5'-AMP + H2O = 1-(5-phospho-beta-D-ribosyl)-5-[(5-phospho-beta-D-ribosylamino)methylideneamino]imidazole-4-carboxamide. The protein operates within amino-acid biosynthesis; L-histidine biosynthesis; L-histidine from 5-phospho-alpha-D-ribose 1-diphosphate: step 3/9. Its function is as follows. Catalyzes the hydrolysis of the adenine ring of phosphoribosyl-AMP. This chain is Phosphoribosyl-AMP cyclohydrolase, found in Burkholderia multivorans (strain ATCC 17616 / 249).